Consider the following 304-residue polypeptide: Ribosome-inactivating protein 9 (304 aa).

Glutamate 208 is a catalytic residue.

It belongs to the ribosome-inactivating protein family. Type 1 RIP subfamily. Monomer. In terms of tissue distribution, accumulates to high levels in seeds.

Its subcellular location is the cytoplasm. It catalyses the reaction Endohydrolysis of the N-glycosidic bond at one specific adenosine on the 28S rRNA.. In terms of biological role, possesses features of some constitutive defense agent. The coordinate Opaque-2-controlled synthesis of this protein and the major seed storage proteins (zeins) may provide the germinating seedling with both nutritional benefits and protection against pathogen invasion of the surrounding endosperm. This is Ribosome-inactivating protein 9 (CRIP9) from Zea mays (Maize).